Reading from the N-terminus, the 916-residue chain is Oxysterol-binding protein 2 (916 aa).

Disordered stretches follow at residues 1 to 20, 34 to 121, and 139 to 163; these read MGKA…SRGL, TAAP…PFTK, and PESG…TPLG. A compositionally biased stretch (pro residues) spans 49–58; sequence EPKPQPQPVP. Residues 79 to 92 are compositionally biased toward low complexity; the sequence is RSEPVSETTSEPEP. Polar residues predominate over residues 99 to 113; the sequence is ELLQGSRPGSESSSG. The segment covering 144 to 155 has biased composition (low complexity); sequence LPALKPLPLLRP. A PH domain is found at 182-274; it reads LDSFEGWLLK…WITALELAKA (93 aa). Disordered stretches follow at residues 282 to 301 and 417 to 448; these read THSD…DKSE and FHSA…EEDE. Position 287 is a phosphoserine (Ser287). Ser763 carries the phosphoserine modification. Residues 813 to 842 are disordered; that stretch reads EGVAPTDSRLRPDQRLMEKGRWDEANTEKQ.

Belongs to the OSBP family. In terms of assembly, interacts with CCDC159. In terms of tissue distribution, expressed mainly in retina, testis, and fetal liver.

It localises to the membrane. Its subcellular location is the cytoplasmic vesicle. It is found in the secretory vesicle. The protein localises to the acrosome. Binds 7-ketocholesterol. Acts during spermatid development where its function is required prior to the removal of cytoplasm from the sperm head. The protein is Oxysterol-binding protein 2 (OSBP2) of Homo sapiens (Human).